A 125-amino-acid polypeptide reads, in one-letter code: Snaclec VP12 subunit B (125 aa).

Intrachain disulfides connect Cys4-Cys15, Cys32-Cys121, and Cys98-Cys113. The 112-residue stretch at 11–122 (FEKYCYKVFQ…CNDPRYFVCK (112 aa)) folds into the C-type lectin domain.

The protein belongs to the snaclec family. Heterodimer of subunits alpha and beta; disulfide-linked. As to expression, expressed by the venom gland.

The protein localises to the secreted. Functionally, inhibits integrin alpha-2/beta-1- (ITGA2/ITGB1) dependent melanoma metastasis. This chain is Snaclec VP12 subunit B, found in Daboia palaestinae (Palestine viper).